The following is a 1411-amino-acid chain: Zinc finger protein 609 (1411 aa).

Disordered stretches follow at residues 1-26, 47-190, 353-484, 517-659, 679-963, 1005-1125, 1153-1221, and 1270-1367; these read MSLSSGASGGKGVDANPVETYDSGDE, QKLE…QPVP, PRFC…EPTV, AHAH…ARPI, ASPG…VIQQ, YEEQ…RQAE, KSED…LTQH, and GSKV…STHH. Phosphoserine occurs at positions 358, 361, and 379. Residues 377-401 are compositionally biased toward polar residues; the sequence is PNSNTPVNETATASDSKGTSNSSKT. T381 is subject to Phosphothreonine. S413, S433, S446, S452, S467, and S470 each carry phosphoserine. A compositionally biased stretch (polar residues) spans 423-437; it reads ASSTSEDVKASPSSA. K479 participates in a covalent cross-link: Glycyl lysine isopeptide (Lys-Gly) (interchain with G-Cter in SUMO2). The C2H2-type zinc-finger motif lies at 495-520; the sequence is IDCPHPNCNKKYKHINGLKYHQAHAH. Residues 519 to 529 show a composition bias toward basic and acidic residues; sequence AHTDDDSKPEA. S533 carries the post-translational modification Phosphoserine. A compositionally biased stretch (polar residues) spans 549 to 563; the sequence is NGASVSQKGSLSPAR. A phosphoserine mark is found at S576 and S578. The span at 626–649 shows a compositional bias: basic and acidic residues; the sequence is SLERKCMEKEKCKKPSSLKPEKIP. Over residues 679 to 700 the composition is skewed to polar residues; the sequence is ASPGSSSGLTATVAQAMPNSPQ. Residues 726–736 are compositionally biased toward basic residues; it reads DKKKKDKKKKE. A Phosphoserine modification is found at S743. T746 bears the Phosphothreonine mark. Residues 751–764 are compositionally biased toward basic and acidic residues; that stretch reads CRAEEGKSPFRESS. Phosphoserine is present on S758. Residue K789 forms a Glycyl lysine isopeptide (Lys-Gly) (interchain with G-Cter in SUMO2) linkage. Polar residues predominate over residues 798–844; the sequence is FTDNAPSPSIGGSSRLENTTPTQPLTPLHVVTQNGAEASSVKTNSPA. S804 bears the Phosphoserine mark. T823 is modified (phosphothreonine). S842, S846, and S849 each carry phosphoserine. A compositionally biased stretch (basic and acidic residues) spans 855 to 876; the sequence is GEGKVDSVKSKDAEQLVKEGAK. Residues 897 to 908 show a composition bias toward low complexity; it reads SYYSPSYAQSSP. The segment covering 926–950 has biased composition (basic and acidic residues); sequence TKRDEEPESIEGKVKNDICEEKKPE. Low complexity predominate over residues 952–963; it reads SSSSQQPSVIQQ. A compositionally biased stretch (basic and acidic residues) spans 1020–1042; the sequence is GVDKKAEMGLKEREAALKEEWKQ. A Phosphoserine modification is found at S1055. Residue K1061 forms a Glycyl lysine isopeptide (Lys-Gly) (interchain with G-Cter in SUMO2) linkage. 3 stretches are compositionally biased toward basic and acidic residues: residues 1097 to 1113, 1153 to 1187, and 1195 to 1208; these read LKVKLSDASHLSKEASE, KSEDERWKEERDRKLKEERSRSKDSVPKEDGKEST, and TSEESRLGSKEPRP. Residue K1153 forms a Glycyl lysine isopeptide (Lys-Gly) (interchain with G-Cter in SUMO2) linkage. The segment covering 1286-1296 has biased composition (polar residues); it reads PSVTCKSSSES. K1297 participates in a covalent cross-link: Glycyl lysine isopeptide (Lys-Gly) (interchain with G-Cter in SUMO2). A compositionally biased stretch (gly residues) spans 1328–1337; that stretch reads GCGVVGGGGS.

Interacts (via N-terminus) with NIPBL. Interacts with INTS13; promoting association with the integrator complex. As to expression, isoform 1: Expressed in myoblasts and myotubes. Isoform 2: Expressed in myoblasts and myotubes, with a preference in undifferentiated myoblasts.

It is found in the nucleus. Transcription factor, which activates RAG1, and possibly RAG2, transcription. Through the regulation of RAG1/2 expression, may regulate thymocyte maturation. Along with NIPBL and the multiprotein complex Integrator, promotes cortical neuron migration during brain development by regulating the transcription of crucial genes in this process. Preferentially binds promoters containing paused RNA polymerase II. Up-regulates the expression of SEMA3A, NRP1, PLXND1 and GABBR2 genes, among others. Functionally, involved in the regulation of myoblast proliferation during myogenesis. This Homo sapiens (Human) protein is Zinc finger protein 609.